The sequence spans 308 residues: Putative transcription elongation factor S-II (308 aa).

The region spanning 5 to 84 is the TFIIS N-terminal domain; that stretch reads EETQSLCKQV…KDWKNVVDGK (80 aa). Residues 82–126 form a disordered region; the sequence is DGKSKSQDDGGAPPAKKHRKESVEEAKPEKKKIEAPYKRPEPSSR. Residues 102–125 show a composition bias toward basic and acidic residues; that stretch reads ESVEEAKPEKKKIEAPYKRPEPSS. In terms of domain architecture, TFIIS central spans 148–263; the sequence is TRLKSAQLLL…EHQMSVQQGT (116 aa). A TFIIS-type zinc finger spans residues 266 to 306; sequence DMFKCGKCGKKNCTYTQLQTRSSDEPMTTFVFCLECGNRWK. Zn(2+) contacts are provided by Cys-270, Cys-273, Cys-298, and Cys-301.

It belongs to the TFS-II family.

It localises to the nucleus. Necessary for efficient RNA polymerase II transcription elongation past template-encoded arresting sites. The arresting sites in DNA have the property of trapping a certain fraction of elongating RNA polymerases that pass through, resulting in locked ternary complexes. Cleavage of the nascent transcript by S-II allows the resumption of elongation from the new 3'-terminus. The chain is Putative transcription elongation factor S-II from Caenorhabditis elegans.